A 385-amino-acid chain; its full sequence is Guanine nucleotide-binding protein alpha-5 subunit (385 aa).

A lipid anchor (N-myristoyl glycine) is attached at glycine 2. Cysteine 6 carries S-palmitoyl cysteine lipidation. In terms of domain architecture, G-alpha spans 32-385 (RKIKMLLLGI…NKNIETLSLE (354 aa)). The segment at 35–48 (KMLLLGISDSGKST) is G1 motif. GTP-binding positions include 40–47 (GISDSGKS), 174–180 (IHMRQTT), 199–203 (DVGGQ), 298–301 (NKID), and alanine 357. Mg(2+) is bound by residues serine 47 and threonine 180. The segment at 172-180 (DLIHMRQTT) is G2 motif. Residues 195–204 (IRLIDVGGQK) form a G3 motif region. Residues 294 to 301 (MLFLNKID) form a G4 motif region. Residues 355–360 (TQATIT) are G5 motif.

The protein belongs to the G-alpha family. As to quaternary structure, g proteins are composed of 3 units; alpha, beta and gamma. The alpha chain contains the guanine nucleotide binding site.

Its function is as follows. Guanine nucleotide-binding proteins (G proteins) are involved as modulators or transducers in various transmembrane signaling systems. This Caenorhabditis briggsae protein is Guanine nucleotide-binding protein alpha-5 subunit (gpa-5).